The chain runs to 618 residues: Leucine aminopeptidase 2 (618 aa).

Residues 139 to 141 and 271 to 276 contribute to the a peptide site; these read QCQ and PYGGME. His300 serves as a coordination point for Zn(2+). Glu301 acts as the Proton acceptor in catalysis. The Zn(2+) site is built by His304 and Glu323. Tyr388 (proton donor) is an active-site residue.

It belongs to the peptidase M1 family. Zn(2+) serves as cofactor.

It is found in the cytoplasm. It localises to the nucleus. The enzyme catalyses an epoxide + H2O = an ethanediol. In terms of biological role, aminopeptidase that preferentially cleaves di- and tripeptides. Also has low epoxide hydrolase activity (in vitro). Can hydrolyze the epoxide leukotriene LTA(4) but it forms preferentially 5,6-dihydroxy-7,9,11,14-eicosatetraenoic acid rather than the cytokine leukotriene B(4) as the product compared to the homologous mammalian enzyme (in vitro). The sequence is that of Leucine aminopeptidase 2 from Aspergillus niger (strain ATCC MYA-4892 / CBS 513.88 / FGSC A1513).